Here is a 578-residue protein sequence, read N- to C-terminus: 65-kDa microtubule-associated protein 2 (578 aa).

Coiled coils occupy residues 64–84 (AELL…TTAL), 151–184 (DETD…VLEF), 235–257 (TLKE…LTDL), 290–312 (ALAL…LKSS), and 461–489 (AMLD…QQEQ). Basic and acidic residues predominate over residues 473-494 (REDEKRRLKEQKKQQEQPHTDQ). The segment at 473 to 578 (REDEKRRLKE…SRADPVMASP (106 aa)) is disordered. S503 and S532 each carry phosphoserine. A compositionally biased stretch (polar residues) spans 549–558 (KIASPSNIVA). Residues S566, S569, and S577 each carry the phosphoserine modification.

The protein belongs to the MAP65/ASE1 family. As to quaternary structure, forms a dimer. Binds to microtubules (MT). Bundles polymerized MT via the formation of 25-nm crossbridges with centrally located endocytic MT.

Its subcellular location is the nucleus. The protein resides in the cytoplasm. It localises to the cytoskeleton. The protein localises to the spindle pole. It is found in the phragmoplast. Its function is as follows. Microtubule-associated protein that stabilize microtubules (MT). Involved in the regulation of MT organization and dynamics. Confers MT resistance to the drug propyzamide and cold conditions. In Arabidopsis thaliana (Mouse-ear cress), this protein is 65-kDa microtubule-associated protein 2 (MAP65-2).